Consider the following 804-residue polypeptide: Mechanosensitive cation channel TMEM63A (804 aa).

Topologically, residues 1 to 51 (MTSSPFLDPWPSKAVFVRERLGLGERPNDSYCYNSAKNSTVLQGVTFGGIP) are extracellular. N38 is a glycosylation site (N-linked (GlcNAc...) asparagine). Residues 52–74 (TVLLLDVSCFLFLILVFSIIRRR) form a helical membrane-spanning segment. The Cytoplasmic portion of the chain corresponds to 75-133 (FWDYGRIALVSEAGSEARFQRLSSSSSGQQDFENELGCCPWLTAIFRLHDDQILEWCGE). Residues 134–166 (DAIHYLSFQRHIIFLLVVISFLSLCVILPVNLS) form a helical membrane-spanning segment. Topologically, residues 167–190 (GDLLGKDPYSFGRTTIANLQTDND) are extracellular. The helical transmembrane segment at 191–216 (LLWLHTVFSVIYLFLTVGFMWHHTRS) threads the bilayer. At 217–415 (IRYKEESLVR…CWKNLSIQGV (199 aa)) the chain is on the cytoplasmic side. Residues 218 to 413 (RYKEESLVRQ…DICWKNLSIQ (196 aa)) are intracellular linker IL2; confers mechanosensitivity. Residues 416 to 443 (RWWLQWLGINFSLFVVLFFLTTPSIIMS) traverse the membrane as a helical segment. The Extracellular portion of the chain corresponds to 444–461 (TMDKFNVTKPIHALNNPV). An N-linked (GlcNAc...) asparagine glycan is attached at N449. Residues 462 to 489 (ISQFFPTLLLWSFSALLPSIVYYSTLLE) traverse the membrane as a helical segment. At 490–494 (SHWTR) the chain is on the cytoplasmic side. A helical membrane pass occupies residues 495 to 531 (SGENRIMVSKVYIFLIFMVLILPSLGLTSLDFFFRWL). The Extracellular portion of the chain corresponds to 532 to 553 (FDKTSSETSIRLECVFLPDQGA). Residues 554–585 (FFVNYVIASAFIGSGMELLRLPGLILYTFRMI) form a helical membrane-spanning segment. A gating helix region spans residues 554–585 (FFVNYVIASAFIGSGMELLRLPGLILYTFRMI). At 586–605 (MAKTAADRRNVKQNQAFEYE) the chain is on the cytoplasmic side. A helical transmembrane segment spans residues 606–623 (FGAMYAWMLCVFTVIMAY). Residues 624-627 (SITC) are Extracellular-facing. The helical transmembrane segment at 628–650 (PIIVPFGLIYILLKHMVDRHNLY) threads the bilayer. Over 651 to 660 (FAYLPAKLEK) the chain is Cytoplasmic. A helical membrane pass occupies residues 661–688 (RIHFAAVNQALAAPILCLFWLFFFSFLR). The Extracellular segment spans residues 689-693 (LGLTA). Residues 694-708 (PATLFTFLVVLLTIL) traverse the membrane as a helical segment. The Cytoplasmic segment spans residues 709 to 804 (ACLLYTCFGC…GTAAYAYQES (96 aa)). Position 738 is a phosphoserine (S738).

This sequence belongs to the CSC1 (TC 1.A.17) family. Monomer. Post-translationally, N-Glycosylated.

Its subcellular location is the lysosome membrane. The protein localises to the early endosome membrane. The protein resides in the cell membrane. The enzyme catalyses Ca(2+)(in) = Ca(2+)(out). Its function is as follows. Mechanosensitive cation channel with low conductance and high activation threshold. In contrast to TMEM63B, does not show phospholipid scramblase activity. Acts as a regulator of lysosomal morphology by mediating lysosomal mechanosensitivity. Important for the baby's first breath and respiration throughout life. Upon lung inflation conducts cation currents in alveolar type 1 and 2 cells triggering lamellar body exocytosis and surfactant secretion into airspace. Also acts as an osmosensitive cation channel preferentially activated by hypotonic stress. The protein is Mechanosensitive cation channel TMEM63A of Mus musculus (Mouse).